We begin with the raw amino-acid sequence, 162 residues long: Succinate dehydrogenase assembly factor 2-A, mitochondrial (162 aa).

Belongs to the SDHAF2 family. Interacts with the flavoprotein subunit within the SDH catalytic dimer.

Its subcellular location is the mitochondrion matrix. Functionally, plays an essential role in the assembly of succinate dehydrogenase (SDH), an enzyme complex (also referred to as respiratory complex II) that is a component of both the tricarboxylic acid (TCA) cycle and the mitochondrial electron transport chain, and which couples the oxidation of succinate to fumarate with the reduction of ubiquinone (coenzyme Q) to ubiquinol. Required for flavinylation (covalent attachment of FAD) of the flavoprotein subunit of the SDH catalytic dimer. The sequence is that of Succinate dehydrogenase assembly factor 2-A, mitochondrial from Drosophila yakuba (Fruit fly).